The following is a 417-amino-acid chain: Diphosphomevalonate decarboxylase 1 (417 aa).

22–25 (YWGK) lines the (R)-5-diphosphomevalonate pocket. The short motif at 39–47 (RVSLDPDHL) is the Peroxisomal targeting signal PTS2 element. Residues Arg77, 160–165 (SGSACR), and Thr216 contribute to the (R)-5-diphosphomevalonate site.

The protein belongs to the diphosphomevalonate decarboxylase family. Homodimer.

It localises to the peroxisome. The catalysed reaction is (R)-5-diphosphomevalonate + ATP = isopentenyl diphosphate + ADP + phosphate + CO2. It functions in the pathway isoprenoid biosynthesis; isopentenyl diphosphate biosynthesis via mevalonate pathway; isopentenyl diphosphate from (R)-mevalonate: step 3/3. Functionally, performs the first committed step in the biosynthesis of isoprene-containing compounds such as sterols and terpenoids. Component of the triterpene saponins (e.g. ginsenosides or panaxosides) and phytosterols biosynthetic pathways. Catalyzes the conversion of mevalonate diphosphate to isopentenyl diphosphate (IPP). This is Diphosphomevalonate decarboxylase 1 from Panax ginseng (Korean ginseng).